The primary structure comprises 78 residues: Small ribosomal subunit protein bS16c (78 aa).

The protein belongs to the bacterial ribosomal protein bS16 family.

It localises to the plastid. The protein resides in the chloroplast. The chain is Small ribosomal subunit protein bS16c from Gracilaria tenuistipitata var. liui (Red alga).